Here is a 117-residue protein sequence, read N- to C-terminus: uncharacterized protein (117 aa).

This is an uncharacterized protein from Encephalitozoon cuniculi (strain GB-M1) (Microsporidian parasite).